Consider the following 275-residue polypeptide: MTLQQQIIKALGSKPQINAEEEIRRSVDFLKSYLQTYPFIKSLVLGISGGQDSTLAGKLCQMAINELRQETGNESLQFIAVRLPYGVQADEQDCQDAIAFIQPDRVLTVNIKGAVLASEQALREADIELSDFVRGNEKARERMKAQYSIAGMTSGVVVGTDHAAEAITGFFTKYGDGGTDINPLYRLNKRQGKQLLAALACPEHLYKKAPTADLEDDRPSLPDEVALGVTYDNIDDYLEGKNVPQQVARTIENWYLKTEHKRRPPITVFDDFWKK.

46 to 53 is an ATP binding site; it reads GISGGQDS. A Mg(2+)-binding site is contributed by D52. R140 lines the deamido-NAD(+) pocket. An ATP-binding site is contributed by T160. E165 is a binding site for Mg(2+). The deamido-NAD(+) site is built by K173 and D180. Residues K189 and T211 each contribute to the ATP site. 260–261 is a deamido-NAD(+) binding site; that stretch reads HK.

Belongs to the NAD synthetase family. As to quaternary structure, homodimer.

The catalysed reaction is deamido-NAD(+) + NH4(+) + ATP = AMP + diphosphate + NAD(+) + H(+). Its pathway is cofactor biosynthesis; NAD(+) biosynthesis; NAD(+) from deamido-NAD(+) (ammonia route): step 1/1. In terms of biological role, catalyzes the ATP-dependent amidation of deamido-NAD to form NAD. Uses ammonia as a nitrogen source. The chain is NH(3)-dependent NAD(+) synthetase from Shigella boydii serotype 18 (strain CDC 3083-94 / BS512).